The following is a 210-amino-acid chain: 3 beta-hydroxysteroid dehydrogenase/Delta 5--&gt;4-isomerase (210 aa).

Tyr29 acts as the Proton acceptor in catalysis. Residue Lys33 participates in NAD(+) binding.

It belongs to the 3-beta-HSD family.

It carries out the reaction a 3beta-hydroxy-Delta(5)-steroid + NAD(+) = a 3-oxo-Delta(5)-steroid + NADH + H(+). The catalysed reaction is a 3-oxo-Delta(5)-steroid = a 3-oxo-Delta(4)-steroid. It participates in lipid metabolism; steroid biosynthesis. Functionally, catalyzes the oxidative conversion of Delta(5)-ene-3-beta-hydroxy steroid, and the oxidative conversion of ketosteroids. The 3-beta-HSD enzymatic system plays a crucial role in the biosynthesis of all classes of hormonal steroids. During viral infection, steroid production contributes to virulence by inhibiting the host inflammatory response. In Variola virus (isolate Human/India/Ind3/1967) (VARV), this protein is 3 beta-hydroxysteroid dehydrogenase/Delta 5--&gt;4-isomerase (OPG174).